The chain runs to 48 residues: Small, acid-soluble spore protein O (48 aa).

Residues 1 to 48 form a disordered region; sequence MAKRKANHVINGMNNAKRQGNGAGYIENDQHILTEAERQNNKKRKTNQ. The span at 28–40 shows a compositional bias: basic and acidic residues; sequence NDQHILTEAERQN.

Belongs to the SspO family.

It localises to the spore core. This chain is Small, acid-soluble spore protein O, found in Bacillus licheniformis (strain ATCC 14580 / DSM 13 / JCM 2505 / CCUG 7422 / NBRC 12200 / NCIMB 9375 / NCTC 10341 / NRRL NRS-1264 / Gibson 46).